Here is a 245-residue protein sequence, read N- to C-terminus: NAD-dependent protein deacetylase (245 aa).

The region spanning 1-245 (MIFVQQFEEV…EFVEGLSSMK (245 aa)) is the Deacetylase sirtuin-type domain. Residues Ala26, Thr30, Phe37, Arg38, Gln105, Ile107, Asp108, and His123 each coordinate NAD(+). Phe37 provides a ligand contact to nicotinamide. Residues Ile107 and Asp108 each coordinate nicotinamide. The active-site Proton acceptor is His123. Residues Cys131, Cys134, Cys151, and Cys154 each contribute to the Zn(2+) site. NAD(+) contacts are provided by Thr190, Ser191, Asn216, and Ile234.

Belongs to the sirtuin family. Class U subfamily. Zn(2+) serves as cofactor.

Its subcellular location is the cytoplasm. The catalysed reaction is N(6)-acetyl-L-lysyl-[protein] + NAD(+) + H2O = 2''-O-acetyl-ADP-D-ribose + nicotinamide + L-lysyl-[protein]. In terms of biological role, NAD-dependent protein deacetylase which modulates the activities of several enzymes which are inactive in their acetylated form. The sequence is that of NAD-dependent protein deacetylase from Bacillus cereus (strain ATCC 14579 / DSM 31 / CCUG 7414 / JCM 2152 / NBRC 15305 / NCIMB 9373 / NCTC 2599 / NRRL B-3711).